The following is a 200-amino-acid chain: Protein GrpE (200 aa).

Residues 1-11 (MSNQTNKAQDN) are compositionally biased toward polar residues. Positions 1 to 25 (MSNQTNKAQDNQVEEIVEGELLNEN) are disordered.

This sequence belongs to the GrpE family. As to quaternary structure, homodimer.

The protein localises to the cytoplasm. Its function is as follows. Participates actively in the response to hyperosmotic and heat shock by preventing the aggregation of stress-denatured proteins, in association with DnaK and GrpE. It is the nucleotide exchange factor for DnaK and may function as a thermosensor. Unfolded proteins bind initially to DnaJ; upon interaction with the DnaJ-bound protein, DnaK hydrolyzes its bound ATP, resulting in the formation of a stable complex. GrpE releases ADP from DnaK; ATP binding to DnaK triggers the release of the substrate protein, thus completing the reaction cycle. Several rounds of ATP-dependent interactions between DnaJ, DnaK and GrpE are required for fully efficient folding. The protein is Protein GrpE of Shewanella pealeana (strain ATCC 700345 / ANG-SQ1).